Reading from the N-terminus, the 902-residue chain is HTH-type transcriptional regulator MalT (902 aa).

39–46 serves as a coordination point for ATP; that stretch reads SPAGYGKT. An HTH luxR-type domain is found at 830-895; it reads ELIRTSPLTQ…DAVQHAQQLL (66 aa). Positions 854-873 form a DNA-binding region, H-T-H motif; that stretch reads NEQIAGELAVAATTIKTHIR.

The protein belongs to the MalT family. As to quaternary structure, monomer in solution. Oligomerizes to an active state in the presence of the positive effectors ATP and maltotriose.

Activated by ATP and maltotriose, which are both required for DNA binding. Its function is as follows. Positively regulates the transcription of the maltose regulon whose gene products are responsible for uptake and catabolism of malto-oligosaccharides. Specifically binds to the promoter region of its target genes, recognizing a short DNA motif called the MalT box. In Salmonella dublin (strain CT_02021853), this protein is HTH-type transcriptional regulator MalT.